The following is a 558-amino-acid chain: Mitochondrial nucleoid-associated protein 1 (558 aa).

Over 1–527 (MGAAEPRMEV…VQCNTTIKKS (527 aa)) the chain is Extracellular. Disordered regions lie at residues 29 to 88 (KMRG…SWTA), 130 to 205 (LQRV…KLGT), and 222 to 269 (LSDR…KTQK). Polar residues predominate over residues 36–45 (SADQNVSQSK). Basic and acidic residues predominate over residues 51–81 (QKEKSPTRDLTRAKEKELEVDRPKRAVKAET). Composition is skewed to polar residues over residues 131–144 (QRVTTPWSPASDAT) and 187–197 (SSTQPHANPAT). Residues 528–548 (GVGGLTMLFAGYFILCCNWSF) form a helical membrane-spanning segment. Topologically, residues 549–558 (KHLKLQHWRK) are cytoplasmic.

It localises to the mitochondrion inner membrane. The protein resides in the mitochondrion matrix. The protein localises to the mitochondrion nucleoid. Its function is as follows. Critical regulator of mitochondrial DNA (mtDNA) abundance. Binds dsDNA throughout the mitochondrial genome without sequence specificity and controls mtDNA copy number by promoting its replication. Also plays important roles in mitochondrial metabolism and cell proliferation. This is Mitochondrial nucleoid-associated protein 1 from Mus musculus (Mouse).